The sequence spans 259 residues: Peroxisomal membrane protein 11B (259 aa).

An N6-acetyllysine modification is found at Lys43. Residues 157-176 (LKGSGGGVPGGSETGGLGGP) form a disordered region. Gly residues predominate over residues 159–176 (GSGGGVPGGSETGGLGGP). Positions 211 to 259 (VVRNACDLFIPLDKLGLWRCGPGIVGLCGLVSSILSILTLIYPWLRLKP) are interaction with PEX19, PEX11G and FIS1 and peroxisome targeting. Residues 233 to 255 (GIVGLCGLVSSILSILTLIYPWL) form a helical membrane-spanning segment.

The protein belongs to the peroxin-11 family. As to quaternary structure, homodimer. Heterodimer with PEX11G. Interacts with PEX19. Interacts with FIS1.

It is found in the peroxisome membrane. Functionally, involved in peroxisomal proliferation. May regulate peroxisome division by recruiting the dynamin-related GTPase DNM1L to the peroxisomal membrane. Promotes membrane protrusion and elongation on the peroxisomal surface. This is Peroxisomal membrane protein 11B (PEX11B) from Homo sapiens (Human).